A 1147-amino-acid chain; its full sequence is Multiple epidermal growth factor-like domains protein 10 (1147 aa).

A signal peptide spans 1-25 (MAISSSSCLGLICSLLCHWVGTASS). The segment at 1–857 (MAISSSSCLG…ALPADSYQIG (857 aa)) is necessary for interaction with AP2M1, self-assembly and formation of the irregular, mosaic-like adhesion pattern. The Extracellular portion of the chain corresponds to 26–857 (LNLEDPNVCS…ALPADSYQIG (832 aa)). Residues 30–107 (DPNVCSHWES…FYESRDMCVP (78 aa)) enclose the EMI domain. Intrachain disulfides connect Cys34–Cys95, Cys60–Cys69, Cys94–Cys105, Cys109–Cys124, Cys126–Cys135, Cys148–Cys160, Cys154–Cys167, Cys169–Cys178, Cys191–Cys203, Cys197–Cys210, Cys212–Cys221, Cys234–Cys246, Cys240–Cys253, Cys255–Cys264, Cys281–Cys289, Cys283–Cys296, Cys298–Cys307, Cys320–Cys332, Cys326–Cys339, Cys341–Cys350, Cys409–Cys421, Cys415–Cys428, Cys430–Cys439, Cys456–Cys464, Cys458–Cys471, Cys473–Cys482, Cys495–Cys507, Cys501–Cys514, Cys516–Cys525, Cys542–Cys550, Cys544–Cys557, Cys559–Cys568, Cys581–Cys593, Cys587–Cys600, Cys602–Cys611, Cys669–Cys681, Cys675–Cys688, Cys690–Cys699, Cys716–Cys724, Cys718–Cys731, Cys733–Cys742, Cys755–Cys767, Cys761–Cys774, Cys776–Cys785, Cys802–Cys810, Cys804–Cys817, and Cys819–Cys828. EGF-like domains lie at 101-136 (SRDM…TNCS), 144-179 (WGPH…WRCE), 187-222 (YGND…AFCE), 230-265 (HGPH…TVCG), 278-308 (SQEC…ERCQ), 316-351 (YGVR…ELCE), 405-440 (YGEA…TDCS), 453-483 (SSRC…VDCS), 491-526 (WGFG…AKCE), 539-569 (AERC…VHCD), 577-612 (WGPN…TTCQ), 665-700 (FGKN…SDCS), 713-743 (IHTC…LYCT), 751-786 (YGKD…RHCE), and 799-829 (RQIC…ARCD). Asn134 is a glycosylation site (N-linked (GlcNAc...) asparagine). The N-linked (GlcNAc...) asparagine glycan is linked to Asn496. Residues 858 to 878 (AIAGIVVLVLVVLFLLALFII) form a helical membrane-spanning segment. Residues 879-1147 (YRHKQKRKES…STSSSSSSSE (269 aa)) are Cytoplasmic-facing. The necessary for formation of large intracellular vacuoles stretch occupies residues 945–1147 (RDRMTIAKSK…STSSSSSSSE (203 aa)). Tyr1030 bears the Phosphotyrosine mark. Residues 1093–1147 (HVTQDPYDLPKNSHIPCHYDLLPVRDSSSSPKREDGGGSNSTSSNSTSSSSSSSE) are disordered. The segment covering 1132–1147 (NSTSSNSTSSSSSSSE) has biased composition (low complexity).

Belongs to the MEGF family. As to quaternary structure, homomer. Interacts with GULP1 and ABCA1. Interacts with AP2M1. Does not interact with MEGF11. Binds with high affinity to complement C1q. Interacts (via the cytoplasmic domain) with NOTCH1 (via NICD domain). In terms of processing, ubiquitinated; mono- and polyubiquitinated forms are detected. Phosphorylated on tyrosine residues. Phosphorylation at Tyr-1030 may be important for muscle cell proliferation. Expressed in cerebellum (at protein level). Expressed in kidney, stellate cells of the cerebellum and macrophage cell lines.

The protein localises to the cell membrane. It localises to the cell projection. The protein resides in the phagocytic cup. In terms of biological role, membrane receptor involved in phagocytosis by macrophages and astrocytes of apoptotic cells. Receptor for C1q, an eat-me signal, that binds phosphatidylserine expressed on the surface of apoptotic cells. Cooperates with ABCA1 within the process of engulfment. Promotes the formation of large intracellular vacuoles and may be responsible for the uptake of amyloid-beta peptides. Necessary for astrocyte-dependent apoptotic neuron clearance in the developing cerebellum. Plays a role in muscle cell proliferation, adhesion and motility. Is also an essential factor in the regulation of myogenesis. Controls the balance between skeletal muscle satellite cells proliferation and differentiation through regulation of the notch signaling pathway. May also function in the mosaic spacing of specific neuron subtypes in the retina through homotypic retinal neuron repulsion. Mosaics provide a mechanism to distribute each cell type evenly across the retina, ensuring that all parts of the visual field have access to a full set of processing elements. The protein is Multiple epidermal growth factor-like domains protein 10 of Mus musculus (Mouse).